Here is a 799-residue protein sequence, read N- to C-terminus: Elongation factor G, mitochondrial (799 aa).

The transit peptide at Met1 to Cys34 directs the protein to the mitochondrion. A tr-type G domain is found at Ser97–Ala384. Residues Ala106–Thr113, Asp182–His186, and Asn236–Asp239 contribute to the GTP site.

The protein belongs to the TRAFAC class translation factor GTPase superfamily. Classic translation factor GTPase family. EF-G/EF-2 subfamily.

The protein resides in the mitochondrion. It participates in protein biosynthesis; polypeptide chain elongation. In terms of biological role, mitochondrial GTPase that catalyzes the GTP-dependent ribosomal translocation step during translation elongation. During this step, the ribosome changes from the pre-translocational (PRE) to the post-translocational (POST) state as the newly formed A-site-bound peptidyl-tRNA and P-site-bound deacylated tRNA move to the P and E sites, respectively. Catalyzes the coordinated movement of the two tRNA molecules, the mRNA and conformational changes in the ribosome. The protein is Elongation factor G, mitochondrial (mef1) of Aspergillus flavus (strain ATCC 200026 / FGSC A1120 / IAM 13836 / NRRL 3357 / JCM 12722 / SRRC 167).